We begin with the raw amino-acid sequence, 222 residues long: Protein GrpE (222 aa).

2 disordered regions span residues 1-21 (MNDGFAMNTHSKDERAPENGQ) and 200-222 (KGGPKAETPAATSEQAAQGPEGA).

This sequence belongs to the GrpE family. As to quaternary structure, homodimer.

It is found in the cytoplasm. Functionally, participates actively in the response to hyperosmotic and heat shock by preventing the aggregation of stress-denatured proteins, in association with DnaK and GrpE. It is the nucleotide exchange factor for DnaK and may function as a thermosensor. Unfolded proteins bind initially to DnaJ; upon interaction with the DnaJ-bound protein, DnaK hydrolyzes its bound ATP, resulting in the formation of a stable complex. GrpE releases ADP from DnaK; ATP binding to DnaK triggers the release of the substrate protein, thus completing the reaction cycle. Several rounds of ATP-dependent interactions between DnaJ, DnaK and GrpE are required for fully efficient folding. This chain is Protein GrpE, found in Chelativorans sp. (strain BNC1).